The sequence spans 312 residues: Pantothenate kinase (312 aa).

ATP is bound at residue 97–104 (GSVAVGKS).

Belongs to the prokaryotic pantothenate kinase family.

Its subcellular location is the cytoplasm. The enzyme catalyses (R)-pantothenate + ATP = (R)-4'-phosphopantothenate + ADP + H(+). It participates in cofactor biosynthesis; coenzyme A biosynthesis; CoA from (R)-pantothenate: step 1/5. This chain is Pantothenate kinase, found in Mycolicibacterium paratuberculosis (strain ATCC BAA-968 / K-10) (Mycobacterium paratuberculosis).